A 469-amino-acid chain; its full sequence is Cytochrome P450 85A1 (469 aa).

The chain crosses the membrane as a helical span at residues methionine 1 to leucine 21. Cysteine 419 serves as a coordination point for heme.

It belongs to the cytochrome P450 family. Heme serves as cofactor. In terms of tissue distribution, expressed at low levels in all the tissues, but preferentially in the leaf sheath.

It is found in the membrane. It carries out the reaction 6-deoxoteasterone + reduced [NADPH--hemoprotein reductase] + O2 = 6alpha-hydroxyteasterone + oxidized [NADPH--hemoprotein reductase] + H2O + H(+). The catalysed reaction is 6alpha-hydroxytyphasterol + reduced [NADPH--hemoprotein reductase] + O2 = teasterone + oxidized [NADPH--hemoprotein reductase] + 2 H2O + H(+). The enzyme catalyses 3-dehydro-6-deoxoteasterone + reduced [NADPH--hemoprotein reductase] + O2 = 3-dehydro-6alpha-hydroxyteasterone + oxidized [NADPH--hemoprotein reductase] + H2O + H(+). It catalyses the reaction 3-dehydro-6alpha-hydroxyteasterone + reduced [NADPH--hemoprotein reductase] + O2 = 3-dehydroteasterone + oxidized [NADPH--hemoprotein reductase] + 2 H2O + H(+). It carries out the reaction 6-deoxotyphasterol + reduced [NADPH--hemoprotein reductase] + O2 = 6alpha-hydroxytyphasterol + oxidized [NADPH--hemoprotein reductase] + H2O + H(+). The catalysed reaction is 6alpha-hydroxytyphasterol + reduced [NADPH--hemoprotein reductase] + O2 = typhasterol + oxidized [NADPH--hemoprotein reductase] + 2 H2O + H(+). The enzyme catalyses 3-dehydro-6-deoxoteasterone + 2 reduced [NADPH--hemoprotein reductase] + 2 O2 = 3-dehydroteasterone + 2 oxidized [NADPH--hemoprotein reductase] + 3 H2O + 2 H(+). It catalyses the reaction 6-deoxoteasterone + 2 reduced [NADPH--hemoprotein reductase] + 2 O2 = teasterone + 2 oxidized [NADPH--hemoprotein reductase] + 3 H2O + 2 H(+). It carries out the reaction 6-deoxotyphasterol + 2 reduced [NADPH--hemoprotein reductase] + 2 O2 = typhasterol + 2 oxidized [NADPH--hemoprotein reductase] + 3 H2O + 2 H(+). It functions in the pathway plant hormone biosynthesis; brassinosteroid biosynthesis. Its function is as follows. Catalyzes the C6-oxidation step in brassinosteroids biosynthesis. May convert 6-deoxoteasterone (6-deoxoTE) to teasterone (TE), 3-dehydro-6-deoxoteasterone (6-deoxo3DT, 6-deoxo3DHT) to 3-dehydroteasterone (3DT, 3-DHT), and 6-deoxotyphasterol (6-deoxoTY) to typhasterol (TY). Involved in the organization and elongation of the leaf and stem cells. Not able to convert 6-deoxocastasterone (6-deoxoCS) and castasterone (CS) to brassinolide (BL). In Oryza sativa subsp. japonica (Rice), this protein is Cytochrome P450 85A1.